Reading from the N-terminus, the 180-residue chain is ATP-dependent protease subunit HslV (180 aa).

Thr-7 is an active-site residue. 3 residues coordinate Na(+): Ala-164, Cys-167, and Thr-170.

Belongs to the peptidase T1B family. HslV subfamily. In terms of assembly, a double ring-shaped homohexamer of HslV is capped on each side by a ring-shaped HslU homohexamer. The assembly of the HslU/HslV complex is dependent on binding of ATP.

Its subcellular location is the cytoplasm. The catalysed reaction is ATP-dependent cleavage of peptide bonds with broad specificity.. Its activity is regulated as follows. Allosterically activated by HslU binding. In terms of biological role, protease subunit of a proteasome-like degradation complex believed to be a general protein degrading machinery. This Brevibacillus brevis (strain 47 / JCM 6285 / NBRC 100599) protein is ATP-dependent protease subunit HslV.